Here is a 448-residue protein sequence, read N- to C-terminus: Arginine synthetase ArcE (448 aa).

In terms of assembly, probably forms homotetramers and higher assemblies of tetramers. Mg(2+) serves as cofactor.

It carries out the reaction L-arginine + ADP + phosphate + H(+) = L-citrulline + NH4(+) + ATP. It functions in the pathway amino-acid biosynthesis; L-proline biosynthesis. The protein operates within amino-acid degradation; L-arginine degradation. It participates in amino-acid biosynthesis; L-arginine biosynthesis. Its function is as follows. Arginine deiminase involved in an arginine synthetase pathway, which provides citrulline and ornithine, the precursors for proline biosynthesis. Catalyzes the conversion of L-arginine to citrulline while conserving the energy of arginine deimination to generate ATP from ADP and free phosphate. Is specific toward L-arginine and cannot use D-arginine, agmatine, guanidine, L-alanine-L-arginine dipeptide and L-arginine-L-alanine dipeptide. Can also use CDP, GDP or UDP, with lower activity (38%, 8.4% and 13.3%, respectively). The enzyme can also catalyze the reverse reaction: the ATP-dependent generation of arginine from citrulline in a single reaction by using free ammonia, without the requirement of aspartic acid. In vivo, most likely functions in the arginine catabolism to produce citrulline for proline biosynthesis while also generating ATP, but it can also contribute to arginine biosynthesis when the necessary precursors such as citrulline are abundant. In Thermococcus kodakarensis (strain ATCC BAA-918 / JCM 12380 / KOD1) (Pyrococcus kodakaraensis (strain KOD1)), this protein is Arginine synthetase ArcE.